Consider the following 23-residue polypeptide: Hemocyanin subunit 4 (23 aa).

It belongs to the tyrosinase family. Hemocyanin subfamily. As to expression, hemolymph.

It is found in the secreted. The protein localises to the extracellular space. Its function is as follows. Hemocyanins are copper-containing oxygen carriers occurring freely dissolved in the hemolymph of many mollusks and arthropods. This is Hemocyanin subunit 4 from Carcinus maenas (Common shore crab).